The chain runs to 1018 residues: Fibronectin-binding protein A (1018 aa).

Positions 1-36 (MKNNLRYGIRKHKLGAASVFLGTMIVVGMGQDKEAA) are cleaved as a signal peptide. The YSIRK-G/S signaling motif motif lies at 7–18 (YGIRKHKLGAAS). Residues 37–511 (ASEQKTTTVE…SNKANGNGKN (475 aa)) are ligand-binding A region. Disordered regions lie at residues 38-61 (SEQK…SETQ) and 78-195 (ATVT…ETGT). Composition is skewed to polar residues over residues 39–61 (EQKT…SETQ) and 78–92 (ATVT…QVTT). Positions 112-126 (TVKEEVVKEEAKPQV) are enriched in basic and acidic residues. Over residues 129–139 (TTQSQDNSGDQ) the composition is skewed to polar residues. Residues 194-511 (GTDVTSKVTV…SNKANGNGKN (318 aa)) are fibrinogen/elastin/tropoelastin-binding. Residues 512 to 872 (GPIIQNNKFE…EGQQTIEEDT (361 aa)) form a fibronectin-binding region. Residues 545-574 (EEYDSSTLDIDYHTAIDGGGGYVDGYIETI) form a B-1 repeat. The segment at 545 to 604 (EEYDSSTLDIDYHTAIDGGGGYVDGYIETIEETDSSAIDIDYHTAVDSEAGHVGGYTESS) is 2 X approximate tandem repeats. The stretch at 575–604 (EETDSSAIDIDYHTAVDSEAGHVGGYTESS) is one B-2 repeat. Disordered stretches follow at residues 595–622 (GHVG…NSKH), 740–813 (LGYE…DIDF), and 827–997 (EIIE…GMLF). The stretch at 745 to 782 (GQNSGNQSFEEDTEEDKPKYEQGGNIVDIDFDSVPQIH) is one D-1 repeat. The tract at residues 745–878 (GQNSGNQSFE…EEDTTPPIVP (134 aa)) is 4 X approximate tandem repeats. Residues 783 to 820 (GQNKGNQSFEEDTEKDKPKYEHGGNIIDIDFDSVPHIH) form a D-2 repeat. A D-3 repeat occupies 821 to 859 (GFNKHTEIIEEDTNKDKPSYQFGGHNSVDFEEDTLPKVS). A compositionally biased stretch (basic and acidic residues) spans 827 to 838 (EIIEEDTNKDKP). The stretch at 860-878 (GQNEGQQTIEEDTTPPIVP) is one D-4; truncated repeat. Residues 875–938 (PIVPPTPPTP…PAEPGKPVPP (64 aa)) show a composition bias toward pro residues. 5 WR repeats span residues 879-892 (PTPP…EPET), 893-906 (PTPP…EPET), 907-920 (PTPP…EPET), 921-934 (PTPP…EPGK), and 935-948 (PVPP…KPSK). Residues 879-948 (PTPPTPEVPS…AKEEPKKPSK (70 aa)) are 5 X tandem repeats, Pro-rich (WR). An LPXTG sorting signal motif is present at residues 982–986 (LPETG). Pentaglycyl murein peptidoglycan amidated threonine is present on T985. Positions 986–1018 (GGEESTNKGMLFGGLFSILGLALLRRNKKNHKA) are cleaved as a propeptide — removed by sortase.

It is found in the secreted. The protein resides in the cell wall. Its function is as follows. Promotes bacterial attachment to multiple substrates, such as fibronectin (Fn), fibrinogen (Fg), elastin peptides and tropoelastin. This confers to S.aureus the ability to invade endothelial cells. Promotes adherence to and aggregation of activated platelets. The polypeptide is Fibronectin-binding protein A (Staphylococcus aureus (strain USA300)).